The following is a 393-amino-acid chain: Flap endonuclease 1 (393 aa).

The N-domain stretch occupies residues 1–108 (MGILGLSKLL…SELQERRQRA (108 aa)). Position 34 (Asp34) interacts with Mg(2+). Arg74 is a binding site for DNA. Positions 90, 162, 164, 183, and 185 each coordinate Mg(2+). The interval 126–257 (LMEKMSKRTV…QKAWEGIKKH (132 aa)) is I-domain. Position 162 (Glu162) interacts with DNA. Residues Gly235 and Asp237 each contribute to the DNA site. Asp237 lines the Mg(2+) pocket. Positions 340 to 348 (TQGRLDQFF) are interaction with PCNA.

It belongs to the XPG/RAD2 endonuclease family. FEN1 subfamily. Interacts with PCNA. Three molecules of FEN1 bind to one PCNA trimer with each molecule binding to one PCNA monomer. PCNA stimulates the nuclease activity without altering cleavage specificity. It depends on Mg(2+) as a cofactor. Post-translationally, phosphorylated. Phosphorylation upon DNA damage induces relocalization to the nuclear plasma.

The protein localises to the nucleus. Its subcellular location is the nucleolus. It is found in the nucleoplasm. The protein resides in the mitochondrion. In terms of biological role, structure-specific nuclease with 5'-flap endonuclease and 5'-3' exonuclease activities involved in DNA replication and repair. During DNA replication, cleaves the 5'-overhanging flap structure that is generated by displacement synthesis when DNA polymerase encounters the 5'-end of a downstream Okazaki fragment. It enters the flap from the 5'-end and then tracks to cleave the flap base, leaving a nick for ligation. Also involved in the long patch base excision repair (LP-BER) pathway, by cleaving within the apurinic/apyrimidinic (AP) site-terminated flap. Acts as a genome stabilization factor that prevents flaps from equilibrating into structures that lead to duplications and deletions. Also possesses 5'-3' exonuclease activity on nicked or gapped double-stranded DNA, and exhibits RNase H activity. Also involved in replication and repair of rDNA and in repairing mitochondrial DNA. This is Flap endonuclease 1 from Trypanosoma cruzi (strain CL Brener).